The primary structure comprises 272 residues: MVPDQDGELRHDVCSLSTSLRLTAHVTSSIVHEQSSNIRYGENRKHGQRYAYHEPLPPEIVARCNGHDGKHLTLVTRNSKPVNVRLEKRGQSFYISKGWKKFVELTDLRVGQCVRFSVSSPSTLDLLILDKHGTSLAIPPSKRDLKLKSKRSTHQDSKGHPSNTDPGPSRIINRRVTKSESSANTQLLVQYFSKRYPIDHLEQLMTGRTEDIEVQTLVGPSVNMVLHTSTDHRCNLKKGWTDFALSNGIKLNTVCIFHFYKTTHLGVIVDIF.

The segment at residues 39 to 132 (RYGENRKHGQ…TLDLLILDKH (94 aa)) is a DNA-binding region (TF-B3 1). Positions 139 to 171 (PPSKRDLKLKSKRSTHQDSKGHPSNTDPGPSRI) are disordered. A compositionally biased stretch (basic and acidic residues) spans 141-159 (SKRDLKLKSKRSTHQDSKG). The segment at residues 180–272 (ESSANTQLLV…THLGVIVDIF (93 aa)) is a DNA-binding region (TF-B3 2).

It localises to the nucleus. This chain is B3 domain-containing protein Os10g0323000, found in Oryza sativa subsp. japonica (Rice).